Here is a 166-residue protein sequence, read N- to C-terminus: 6,7-dimethyl-8-ribityllumazine synthase (166 aa).

5-amino-6-(D-ribitylamino)uracil-binding positions include Phe24, 58–60, and 82–84; these read ALE and AVI. 87 to 88 lines the (2S)-2-hydroxy-3-oxobutyl phosphate pocket; that stretch reads ET. The Proton donor role is filled by His90. Asn115 contributes to the 5-amino-6-(D-ribitylamino)uracil binding site. Residue Arg129 coordinates (2S)-2-hydroxy-3-oxobutyl phosphate.

This sequence belongs to the DMRL synthase family.

It carries out the reaction (2S)-2-hydroxy-3-oxobutyl phosphate + 5-amino-6-(D-ribitylamino)uracil = 6,7-dimethyl-8-(1-D-ribityl)lumazine + phosphate + 2 H2O + H(+). The protein operates within cofactor biosynthesis; riboflavin biosynthesis; riboflavin from 2-hydroxy-3-oxobutyl phosphate and 5-amino-6-(D-ribitylamino)uracil: step 1/2. Functionally, catalyzes the formation of 6,7-dimethyl-8-ribityllumazine by condensation of 5-amino-6-(D-ribitylamino)uracil with 3,4-dihydroxy-2-butanone 4-phosphate. This is the penultimate step in the biosynthesis of riboflavin. The polypeptide is 6,7-dimethyl-8-ribityllumazine synthase (Ralstonia pickettii (strain 12J)).